The sequence spans 182 residues: ADP-ribosylation factor 1 (182 aa).

Residue Gly2 is the site of N-myristoyl glycine attachment. GTP contacts are provided by residues 24–31 (GLDNAGKT), 67–71 (DLGGQ), and 126–129 (NKQD).

It belongs to the small GTPase superfamily. Arf family.

It localises to the golgi apparatus. It catalyses the reaction GTP + H2O = GDP + phosphate + H(+). Its function is as follows. GTP-binding protein involved in protein trafficking; may modulate vesicle budding and uncoating within the Golgi apparatus. The sequence is that of ADP-ribosylation factor 1 (ARF1) from Brassica rapa subsp. pekinensis (Chinese cabbage).